Reading from the N-terminus, the 255-residue chain is MTSMFSLKGKTTLITGGSGGIGFSIAKAFAAAGSNVGLLYGRNKKALEYAAELRDKHGVQAKAYSCPIENRSAVIETTNQAVEELGGRLDVMIANAGIAIPHLSLEDKNEDIWTKVVGINLNGAYYTAQAAGHHFKKQGKGSLIFTASMSGHIANWPQQWASYHATKAAVKHLARALAVEWAPFARVNSVSPGYIDTDLTLYADENLRKKWKEYTPQARIGLPDELPGAYLYLASDASSYCTGSDIIVDGGYCSR.

Residues I21 and N95 each contribute to the NADP(+) site. Residues S148 and Y163 each act as proton donor in the active site. Y163, K167, I195, and T197 together coordinate NADP(+). The Lowers pKa of active site Tyr role is filled by K167.

The protein belongs to the short-chain dehydrogenases/reductases (SDR) family.

The enzyme catalyses D-sorbitol + NADP(+) = keto-L-sorbose + NADPH + H(+). Its function is as follows. Catalyzes the NADP dependent reduction of L-sorbose to D-glucitol. This Schizosaccharomyces pombe (strain 972 / ATCC 24843) (Fission yeast) protein is Sorbose reductase sou1 (sou1).